Reading from the N-terminus, the 178-residue chain is Membrane-spanning protein YciB (178 aa).

5 consecutive transmembrane segments (helical) span residues 22–42 (IFIA…ITSI), 52–72 (LINL…HNSS), 76–96 (WKVT…YLFI), 121–141 (LFWS…ILYF), and 151–171 (IFGL…YIYF).

Belongs to the YciB family.

Its subcellular location is the cell membrane. Its function is as follows. Plays a role in cell envelope biogenesis, maintenance of cell envelope integrity and membrane homeostasis. In Buchnera aphidicola subsp. Baizongia pistaciae (strain Bp), this protein is Membrane-spanning protein YciB.